Reading from the N-terminus, the 147-residue chain is UPF0735 ACT domain-containing protein BH1214 (147 aa).

The region spanning 70–145 (TLSINLEDRS…AVEKVELVGS (76 aa)) is the ACT domain.

Belongs to the UPF0735 family.

This is UPF0735 ACT domain-containing protein BH1214 from Halalkalibacterium halodurans (strain ATCC BAA-125 / DSM 18197 / FERM 7344 / JCM 9153 / C-125) (Bacillus halodurans).